Reading from the N-terminus, the 205-residue chain is Imidazole glycerol phosphate synthase subunit HisH (205 aa).

A Glutamine amidotransferase type-1 domain is found at 3–205; the sequence is KIGLIDYGMG…LLRRWIKSIQ (203 aa). The active-site Nucleophile is Cys-81. Active-site residues include His-185 and Glu-187.

Heterodimer of HisH and HisF.

Its subcellular location is the cytoplasm. The enzyme catalyses 5-[(5-phospho-1-deoxy-D-ribulos-1-ylimino)methylamino]-1-(5-phospho-beta-D-ribosyl)imidazole-4-carboxamide + L-glutamine = D-erythro-1-(imidazol-4-yl)glycerol 3-phosphate + 5-amino-1-(5-phospho-beta-D-ribosyl)imidazole-4-carboxamide + L-glutamate + H(+). The catalysed reaction is L-glutamine + H2O = L-glutamate + NH4(+). The protein operates within amino-acid biosynthesis; L-histidine biosynthesis; L-histidine from 5-phospho-alpha-D-ribose 1-diphosphate: step 5/9. In terms of biological role, IGPS catalyzes the conversion of PRFAR and glutamine to IGP, AICAR and glutamate. The HisH subunit catalyzes the hydrolysis of glutamine to glutamate and ammonia as part of the synthesis of IGP and AICAR. The resulting ammonia molecule is channeled to the active site of HisF. The chain is Imidazole glycerol phosphate synthase subunit HisH from Prochlorococcus marinus subsp. pastoris (strain CCMP1986 / NIES-2087 / MED4).